We begin with the raw amino-acid sequence, 261 residues long: Cytochrome c oxidase subunit 3 (261 aa).

The Mitochondrial matrix portion of the chain corresponds to Met-1–Pro-15. The chain crosses the membrane as a helical span at residues Trp-16–Trp-34. Residues Phe-35–Thr-40 are Mitochondrial intermembrane-facing. Residues Ala-41–Thr-66 form a helical membrane-spanning segment. Residues Phe-67–Thr-72 lie on the Mitochondrial matrix side of the membrane. A helical transmembrane segment spans residues Pro-73–Ser-105. At Leu-106–Glu-128 the chain is on the mitochondrial intermembrane side. The chain crosses the membrane as a helical span at residues Val-129 to Met-152. Residues Glu-153–His-155 lie on the Mitochondrial matrix side of the membrane. A helical membrane pass occupies residues Arg-156–Glu-183. Residues Ala-184–Asp-190 are Mitochondrial intermembrane-facing. Residues Gly-191–Leu-223 traverse the membrane as a helical segment. Topologically, residues Lys-224 to His-232 are mitochondrial matrix. A helical membrane pass occupies residues Phe-233 to Ile-256. Residues Tyr-257 to Ser-261 are Mitochondrial intermembrane-facing.

It belongs to the cytochrome c oxidase subunit 3 family. Component of the cytochrome c oxidase (complex IV, CIV), a multisubunit enzyme composed of 14 subunits. The complex is composed of a catalytic core of 3 subunits MT-CO1, MT-CO2 and MT-CO3, encoded in the mitochondrial DNA, and 11 supernumerary subunits COX4I, COX5A, COX5B, COX6A, COX6B, COX6C, COX7A, COX7B, COX7C, COX8 and NDUFA4, which are encoded in the nuclear genome. The complex exists as a monomer or a dimer and forms supercomplexes (SCs) in the inner mitochondrial membrane with NADH-ubiquinone oxidoreductase (complex I, CI) and ubiquinol-cytochrome c oxidoreductase (cytochrome b-c1 complex, complex III, CIII), resulting in different assemblies (supercomplex SCI(1)III(2)IV(1) and megacomplex MCI(2)III(2)IV(2)).

It localises to the mitochondrion inner membrane. The catalysed reaction is 4 Fe(II)-[cytochrome c] + O2 + 8 H(+)(in) = 4 Fe(III)-[cytochrome c] + 2 H2O + 4 H(+)(out). Component of the cytochrome c oxidase, the last enzyme in the mitochondrial electron transport chain which drives oxidative phosphorylation. The respiratory chain contains 3 multisubunit complexes succinate dehydrogenase (complex II, CII), ubiquinol-cytochrome c oxidoreductase (cytochrome b-c1 complex, complex III, CIII) and cytochrome c oxidase (complex IV, CIV), that cooperate to transfer electrons derived from NADH and succinate to molecular oxygen, creating an electrochemical gradient over the inner membrane that drives transmembrane transport and the ATP synthase. Cytochrome c oxidase is the component of the respiratory chain that catalyzes the reduction of oxygen to water. Electrons originating from reduced cytochrome c in the intermembrane space (IMS) are transferred via the dinuclear copper A center (CU(A)) of subunit 2 and heme A of subunit 1 to the active site in subunit 1, a binuclear center (BNC) formed by heme A3 and copper B (CU(B)). The BNC reduces molecular oxygen to 2 water molecules using 4 electrons from cytochrome c in the IMS and 4 protons from the mitochondrial matrix. In Tragelaphus oryx (Eland), this protein is Cytochrome c oxidase subunit 3 (MT-CO3).